Reading from the N-terminus, the 98-residue chain is Small ribosomal subunit protein bS20 (98 aa).

The tract at residues 76–98 (HPNNGARKKSRLASKLKPIEQTA) is disordered.

It belongs to the bacterial ribosomal protein bS20 family.

Its function is as follows. Binds directly to 16S ribosomal RNA. This is Small ribosomal subunit protein bS20 from Trichormus variabilis (strain ATCC 29413 / PCC 7937) (Anabaena variabilis).